We begin with the raw amino-acid sequence, 430 residues long: tRNA(Ile)-lysidine synthase (430 aa).

21–26 is a binding site for ATP; it reads SGGLDS.

Belongs to the tRNA(Ile)-lysidine synthase family.

Its subcellular location is the cytoplasm. It catalyses the reaction cytidine(34) in tRNA(Ile2) + L-lysine + ATP = lysidine(34) in tRNA(Ile2) + AMP + diphosphate + H(+). Its function is as follows. Ligates lysine onto the cytidine present at position 34 of the AUA codon-specific tRNA(Ile) that contains the anticodon CAU, in an ATP-dependent manner. Cytidine is converted to lysidine, thus changing the amino acid specificity of the tRNA from methionine to isoleucine. The protein is tRNA(Ile)-lysidine synthase of Salmonella typhimurium (strain LT2 / SGSC1412 / ATCC 700720).